The chain runs to 128 residues: Con-Ins F2 (128 aa).

The first 24 residues, 1–24 (MTTSSYFLLVALGLLLYVCRSSFG), serve as a signal peptide directing secretion. Cystine bridges form between cysteine 29–cysteine 104, cysteine 41–cysteine 107, cysteine 53–cysteine 120, and cysteine 106–cysteine 111. Positions 59-89 (LQGGTGKKRGRASLLRKRRAFLSMLKARAKR) are cleaved as a propeptide — c peptide. Position 115 is a 4-carboxyglutamate; partial (glutamate 115). The residue at position 127 (serine 127) is a Serine amide.

This sequence belongs to the insulin family. Heterodimer of A and B chains; disulfide-linked. In terms of tissue distribution, expressed by the venom gland.

The protein localises to the secreted. Functionally, this venom insulin facilitates prey capture by rapidly inducing hypoglycemic shock. Intraperitoneal injection of this peptide into zebrafish lowers blood glucose with the same potency than human insulin. In vivo, when applied to water, this peptide reduces overall locomotor activity of zebrafish larvae, observed as a significant decrease in the percentage of time spent swimming and movement frequency. This chain is Con-Ins F2, found in Conus floridulus (Cone snail).